The chain runs to 126 residues: Small ribosomal subunit protein eS24 (126 aa).

The disordered stretch occupies residues 98 to 126 (LYTKPQTSRKQRKEKKNRLKKAGKKTAKK). Positions 104-126 (TSRKQRKEKKNRLKKAGKKTAKK) are enriched in basic residues.

This sequence belongs to the eukaryotic ribosomal protein eS24 family.

The polypeptide is Small ribosomal subunit protein eS24 (rps24) (Dictyostelium discoideum (Social amoeba)).